The chain runs to 506 residues: UDP-N-acetylglucosamine--peptide N-acetylglucosaminyltransferase GtfA subunit (506 aa).

Residue 16–19 (GVEY) participates in UDP binding. Residue His241 participates in N-acetyl-D-glucosamine binding. A UDP-binding site is contributed by 384-385 (HK). 404-407 (EGFG) lines the N-acetyl-D-glucosamine pocket.

The protein belongs to the glycosyltransferase group 1 family. Glycosyltransferase 4 subfamily. As to quaternary structure, interacts with stabilizing protein GtfB (Gtf2), probably as a heterotetramer with 2 subunits each of GtfA and GtfB, part of the accessory SecA2/SecY2 protein translocation apparatus.

The protein resides in the cytoplasm. The protein localises to the cell membrane. It catalyses the reaction L-seryl-[protein] + UDP-N-acetyl-alpha-D-glucosamine = 3-O-[N-acetyl-alpha-D-glucosaminyl]-L-seryl-[protein] + UDP + H(+). Its pathway is protein modification; protein glycosylation. Functionally, required for polymorphic O-glycosylation of the serine-rich repeat protein Srr2. Catalyzes the first step in glycosylation by transferring N-acetylglucosamine from UDP-GlcNAc to serine residues of Srr2. Part of the accessory SecA2/SecY2 system specifically required to export serine-rich repeat proteins, probably Srr2 in this organism. The GtfA-GtfB (Gtf1-Gtf2 in this bacteria) complex adds GlcNAc from UDP-GlcNAc to Srr2 substrate. This subunit has low glycosyltransferase activity; GtfB enhances glycosyltransferase activity in vitro. Upon expression in S.parasanguis GtfA/GtfB restores expression of serine-rich repeat protein Fap1 and complements a biofilm formation defect. The chain is UDP-N-acetylglucosamine--peptide N-acetylglucosaminyltransferase GtfA subunit from Streptococcus agalactiae.